The chain runs to 412 residues: Membrane fusion protein MtrC (412 aa).

The first 24 residues, 1–24, serve as a signal peptide directing secretion; that stretch reads MAFYASKAMRAAALAAAVALALSS. A lipid anchor (N-palmitoyl cysteine) is attached at cysteine 25. Cysteine 25 carries the S-diacylglycerol cysteine lipid modification. Positions 377-412 are disordered; the sequence is AKKVTPKEWAPSENQAAAPQAGVQTASEAKPASEAK. Over residues 388–403 the composition is skewed to polar residues; sequence SENQAAAPQAGVQTAS.

The protein belongs to the membrane fusion protein (MFP) (TC 8.A.1) family.

The protein resides in the cell inner membrane. Functionally, cell membrane lipoprotein, involved in cell membrane permeability to hydrophobic compounds such as antibiotics, dyes and detergents. The protein is Membrane fusion protein MtrC (mtrC) of Neisseria gonorrhoeae.